Here is a 209-residue protein sequence, read N- to C-terminus: Protein N-terminal glutamine amidohydrolase (209 aa).

Catalysis depends on residues Cys-30, His-83, and Asp-99.

This sequence belongs to the NTAQ1 family. Monomer. As to expression, widely expressed.

It localises to the cytoplasm. It is found in the cytosol. The protein resides in the nucleus. It catalyses the reaction N-terminal L-glutaminyl-[protein] + H2O = N-terminal L-glutamyl-[protein] + NH4(+). Its function is as follows. Mediates the side-chain deamidation of N-terminal glutamine residues to glutamate, an important step in N-end rule pathway of protein degradation. Conversion of the resulting N-terminal glutamine to glutamate renders the protein susceptible to arginylation, polyubiquitination and degradation as specified by the N-end rule. Does not act on substrates with internal or C-terminal glutamine and does not act on non-glutamine residues in any position. Does not deaminate acetylated N-terminal glutamine. With the exception of proline, all tested second-position residues on substrate peptides do not greatly influence the activity. In contrast, a proline at position 2, virtually abolishes deamidation of N-terminal glutamine. In Mus musculus (Mouse), this protein is Protein N-terminal glutamine amidohydrolase (Ntaq1).